The following is a 60-amino-acid chain: Histidine-rich metal-binding polypeptide (60 aa).

The disordered stretch occupies residues 1-60 (MAHHEEQHGGHHHHHHHTHHHHYHGGEHHHHHHSSHHEEGCCSTSDSHHQEEGCCHGHHE). Residues 10–35 (GHHHHHHHTHHHHYHGGEHHHHHHSS) show a composition bias toward basic residues. A compositionally biased stretch (basic and acidic residues) spans 36 to 60 (HHEEGCCSTSDSHHQEEGCCHGHHE). A run of 2 repeats spans residues 38 to 42 (EEGCC) and 51 to 55 (EEGCC). Residues 38 to 55 (EEGCCSTSDSHHQEEGCC) form a 2 X 5 AA repeats of E-E-G-C-C region.

Its function is as follows. Strongly binds nickel and zinc. Binds other metals less strongly: cobalt &gt; copper &gt; cadmium &gt; manganese. May act to increase, or at least to preserve, urease activity. Exact function is still unknown. This chain is Histidine-rich metal-binding polypeptide (hpn), found in Helicobacter pylori (strain J99 / ATCC 700824) (Campylobacter pylori J99).